Here is a 384-residue protein sequence, read N- to C-terminus: Sialyltransferase-like protein 3 (384 aa).

Over 1–5 (MKRRH) the chain is Cytoplasmic. The chain crosses the membrane as a helical; Signal-anchor for type II membrane protein span at residues 6–26 (WSHPSCGLLLLVAVFCLLLVF). Residues 27–384 (RCSQLRHSGD…FRLPPVSFYR (358 aa)) are Lumenal-facing. An N-linked (GlcNAc...) asparagine glycan is attached at asparagine 241.

Belongs to the glycosyltransferase 29 family.

It is found in the golgi apparatus membrane. Possesses sialyltransferase-like activity in vitro. Transfers sialic acid to the glycoprotein asialofetuin. The transferred sialic acid is linked to galactose of Gal-beta-1,3-GalNAc through alpha-2,6-linkage. The polypeptide is Sialyltransferase-like protein 3 (Oryza sativa subsp. japonica (Rice)).